We begin with the raw amino-acid sequence, 499 residues long: UDP-N-acetylmuramoylalanine--D-glutamate ligase (499 aa).

128 to 134 contacts ATP; that stretch reads GTNGKTT.

Belongs to the MurCDEF family.

It is found in the cytoplasm. The enzyme catalyses UDP-N-acetyl-alpha-D-muramoyl-L-alanine + D-glutamate + ATP = UDP-N-acetyl-alpha-D-muramoyl-L-alanyl-D-glutamate + ADP + phosphate + H(+). The protein operates within cell wall biogenesis; peptidoglycan biosynthesis. Cell wall formation. Catalyzes the addition of glutamate to the nucleotide precursor UDP-N-acetylmuramoyl-L-alanine (UMA). This is UDP-N-acetylmuramoylalanine--D-glutamate ligase from Rhodococcus jostii (strain RHA1).